The following is an 894-amino-acid chain: DNA mismatch repair protein MutS (894 aa).

Residue 632-639 (GPNMGGKS) participates in ATP binding.

It belongs to the DNA mismatch repair MutS family.

This protein is involved in the repair of mismatches in DNA. It is possible that it carries out the mismatch recognition step. This protein has a weak ATPase activity. This is DNA mismatch repair protein MutS from Paraburkholderia xenovorans (strain LB400).